The sequence spans 113 residues: U11-theraphotoxin-Hhn1a (113 aa).

The signal sequence occupies residues 1–21 (MDTVRVAFLLVLVLAVSLGQA). The propeptide occupies 22 to 74 (DKDENRMEMQEKTEQGKSYLDFAENLLLQKLEELEAKLLEEDSEESRNSRQKR). Residues 60–69 (LEEDSEESRN) are compositionally biased toward basic and acidic residues. Residues 60 to 83 (LEEDSEESRNSRQKRCIGEGVPCD) are disordered. Disulfide bonds link cysteine 75–cysteine 90, cysteine 82–cysteine 95, and cysteine 89–cysteine 110.

This sequence belongs to the neurotoxin 14 (magi-1) family. 01 (HNTX-16) subfamily. In terms of tissue distribution, expressed by the venom gland.

It localises to the secreted. Probable ion channel inhibitor. The sequence is that of U11-theraphotoxin-Hhn1a from Cyriopagopus hainanus (Chinese bird spider).